Here is a 237-residue protein sequence, read N- to C-terminus: Pyridoxine 5'-phosphate synthase (237 aa).

Positions 7 and 18 each coordinate 3-amino-2-oxopropyl phosphate. Residue His43 is the Proton acceptor of the active site. Residues Arg45 and His50 each contribute to the 1-deoxy-D-xylulose 5-phosphate site. Residue Glu70 is the Proton acceptor of the active site. Thr100 serves as a coordination point for 1-deoxy-D-xylulose 5-phosphate. The active-site Proton donor is His190. 3-amino-2-oxopropyl phosphate is bound by residues Asp191 and 213 to 214; that span reads GH.

This sequence belongs to the PNP synthase family. As to quaternary structure, homooctamer; tetramer of dimers.

The protein localises to the cytoplasm. The enzyme catalyses 3-amino-2-oxopropyl phosphate + 1-deoxy-D-xylulose 5-phosphate = pyridoxine 5'-phosphate + phosphate + 2 H2O + H(+). The protein operates within cofactor biosynthesis; pyridoxine 5'-phosphate biosynthesis; pyridoxine 5'-phosphate from D-erythrose 4-phosphate: step 5/5. Catalyzes the complicated ring closure reaction between the two acyclic compounds 1-deoxy-D-xylulose-5-phosphate (DXP) and 3-amino-2-oxopropyl phosphate (1-amino-acetone-3-phosphate or AAP) to form pyridoxine 5'-phosphate (PNP) and inorganic phosphate. This Bacteroides fragilis (strain ATCC 25285 / DSM 2151 / CCUG 4856 / JCM 11019 / LMG 10263 / NCTC 9343 / Onslow / VPI 2553 / EN-2) protein is Pyridoxine 5'-phosphate synthase.